The following is a 187-amino-acid chain: Adenylate kinase (187 aa).

10–15 contributes to the ATP binding site; the sequence is GSGKGT. Residues 30–59 are NMP; the sequence is STGDLLRSEVVAGTPLGLQAKQVMAQGDLV. Residues Thr31, Arg36, 57 to 59, 85 to 88, and Gln92 contribute to the AMP site; these read DLV and GYPR. Positions 126–136 are LID; the sequence is GRAQAEGREDD. Arg127 contributes to the ATP binding site. 2 residues coordinate AMP: Arg133 and Arg144. Gly172 contacts ATP.

It belongs to the adenylate kinase family. As to quaternary structure, monomer.

The protein localises to the cytoplasm. It catalyses the reaction AMP + ATP = 2 ADP. It participates in purine metabolism; AMP biosynthesis via salvage pathway; AMP from ADP: step 1/1. Functionally, catalyzes the reversible transfer of the terminal phosphate group between ATP and AMP. Plays an important role in cellular energy homeostasis and in adenine nucleotide metabolism. This is Adenylate kinase from Xylella fastidiosa (strain M12).